Here is a 140-residue protein sequence, read N- to C-terminus: Protein ripply1 (140 aa).

The WRPW motif; required for gro2-binding signature appears at 28-31; sequence WRPW. The segment at 71 to 106 is ripply homology domain; it reads HPVRLYWPRSKSFDYLFSDGEALLRNFPVQATINFY. Residues 107–126 form a disordered region; it reads DESDSEDEEESCDEDDESDV.

This sequence belongs to the ripply family. As to quaternary structure, interacts with gro2 via the WRPW motif. As to expression, expressed in the embryonic anterior presomitic mesoderm and in newly formed somites.

It localises to the nucleus. In terms of biological role, plays a role in somitogenesis. Essential for transcriptional repression of the segmental patterning genes, thus terminating the segmentation program in the presomitic mesoderm, and also required for the maintenance of rostrocaudal polarity in somites. In Danio rerio (Zebrafish), this protein is Protein ripply1.